We begin with the raw amino-acid sequence, 39 residues long: MTIDRTYPIFTVRWLTVHGLAVPTVSFLGSISAMQFIQR.

Residues 14-30 (WLTVHGLAVPTVSFLGS) form a helical membrane-spanning segment. His-18 is a heme binding site.

The protein belongs to the PsbE/PsbF family. Heterodimer of an alpha subunit and a beta subunit. PSII is composed of 1 copy each of membrane proteins PsbA, PsbB, PsbC, PsbD, PsbE, PsbF, PsbH, PsbI, PsbJ, PsbK, PsbL, PsbM, PsbT, PsbX, PsbY, PsbZ, Psb30/Ycf12, at least 3 peripheral proteins of the oxygen-evolving complex and a large number of cofactors. It forms dimeric complexes. It depends on heme b as a cofactor.

The protein localises to the plastid. Its subcellular location is the chloroplast thylakoid membrane. In terms of biological role, this b-type cytochrome is tightly associated with the reaction center of photosystem II (PSII). PSII is a light-driven water:plastoquinone oxidoreductase that uses light energy to abstract electrons from H(2)O, generating O(2) and a proton gradient subsequently used for ATP formation. It consists of a core antenna complex that captures photons, and an electron transfer chain that converts photonic excitation into a charge separation. The protein is Cytochrome b559 subunit beta of Lactuca sativa (Garden lettuce).